A 564-amino-acid chain; its full sequence is MFS-type transporter kojT (564 aa).

An N-linked (GlcNAc...) asparagine glycan is attached at Asn113. Transmembrane regions (helical) follow at residues 120 to 140, 159 to 179, 187 to 207, 217 to 237, 249 to 269, 278 to 298, 353 to 373, 389 to 409, 437 to 457, 462 to 482, 500 to 520, and 530 to 550; these read WATL…SSID, SLAT…AAPF, PVYI…GLAP, FLAG…MADI, VCCT…AFIG, WTEW…FLFV, IMVA…FGFL, GSVG…FAMV, LWFA…MGWT, ISYW…QGIF, ALVS…IVSI, and WSLT…YIFY.

The protein belongs to the major facilitator superfamily.

The protein resides in the cell membrane. In terms of biological role, MFS-type transporter; part of the gene cluster that mediates the biosynthesis of 5-hydroxy-2-hydroxymethyl-1,4-pyrone, also know as kojic acid, a by-product in the fermentation process of malting rice that acts as a chelation agent. Involved in the seretion of kojic acid. The sequence is that of MFS-type transporter kojT from Aspergillus flavus (strain ATCC 200026 / FGSC A1120 / IAM 13836 / NRRL 3357 / JCM 12722 / SRRC 167).